Consider the following 211-residue polypeptide: Adenylyl-sulfate kinase (211 aa).

32–39 (GLSASGKS) provides a ligand contact to ATP. Ser-107 functions as the Phosphoserine intermediate in the catalytic mechanism.

It belongs to the APS kinase family. As to quaternary structure, homodimer.

It carries out the reaction adenosine 5'-phosphosulfate + ATP = 3'-phosphoadenylyl sulfate + ADP + H(+). It functions in the pathway sulfur metabolism; hydrogen sulfide biosynthesis; sulfite from sulfate: step 2/3. Functionally, catalyzes the synthesis of activated sulfate. The chain is Adenylyl-sulfate kinase from Penicillium chrysogenum (Penicillium notatum).